We begin with the raw amino-acid sequence, 426 residues long: Serine--tRNA ligase (426 aa).

233-235 (TAE) provides a ligand contact to L-serine. 264–266 (RSE) lines the ATP pocket. Glu287 is an L-serine binding site. ATP is bound at residue 351 to 354 (EISS). Position 387 (Ser387) interacts with L-serine.

This sequence belongs to the class-II aminoacyl-tRNA synthetase family. Type-1 seryl-tRNA synthetase subfamily. Homodimer. The tRNA molecule binds across the dimer.

The protein resides in the cytoplasm. It catalyses the reaction tRNA(Ser) + L-serine + ATP = L-seryl-tRNA(Ser) + AMP + diphosphate + H(+). The catalysed reaction is tRNA(Sec) + L-serine + ATP = L-seryl-tRNA(Sec) + AMP + diphosphate + H(+). It participates in aminoacyl-tRNA biosynthesis; selenocysteinyl-tRNA(Sec) biosynthesis; L-seryl-tRNA(Sec) from L-serine and tRNA(Sec): step 1/1. Its function is as follows. Catalyzes the attachment of serine to tRNA(Ser). Is also able to aminoacylate tRNA(Sec) with serine, to form the misacylated tRNA L-seryl-tRNA(Sec), which will be further converted into selenocysteinyl-tRNA(Sec). In Clostridium botulinum (strain Langeland / NCTC 10281 / Type F), this protein is Serine--tRNA ligase.